The sequence spans 167 residues: Signal peptidase complex catalytic subunit SEC11 (167 aa).

Over 1–12 (MNLRLELTRFLK) the chain is Cytoplasmic. A helical; Signal-anchor for type II membrane protein membrane pass occupies residues 13–30 (LCFVLSSAFMFWKGLSIA). Over 31 to 167 (TNSHSPIVVV…LGISALLSNE (137 aa)) the chain is Lumenal. Catalysis depends on charge relay system residues S44, H83, and D109. The interval 153–164 (ALMGFLGISALL) is C-terminal short (CTS) helix.

The protein belongs to the peptidase S26B family. In terms of assembly, component of the signal peptidase complex (SPC) composed of a catalytic subunit SEC11 and three accessory subunits SPC1, SPC2 and SPC3. The complex induces a local thinning of the ER membrane which is used to measure the length of the signal peptide (SP) h-region of protein substrates. This ensures the selectivity of the complex towards h-regions shorter than 18-20 amino acids. SPC associates with the translocon complex.

Its subcellular location is the endoplasmic reticulum membrane. It carries out the reaction Cleavage of hydrophobic, N-terminal signal or leader sequences from secreted and periplasmic proteins.. Functionally, catalytic component of the signal peptidase complex (SPC) which catalyzes the cleavage of N-terminal signal sequences from nascent proteins as they are translocated into the lumen of the endoplasmic reticulum. Specifically cleaves N-terminal signal peptides that contain a hydrophobic alpha-helix (h-region) shorter than 18-20 amino acids. This chain is Signal peptidase complex catalytic subunit SEC11 (SEC11), found in Zygosaccharomyces rouxii (strain ATCC 2623 / CBS 732 / NBRC 1130 / NCYC 568 / NRRL Y-229).